Reading from the N-terminus, the 479-residue chain is D-aminoacyl-tRNA deacylase (479 aa).

The protein belongs to the DtdA deacylase family. In terms of assembly, monomer. Zn(2+) serves as cofactor.

It carries out the reaction a D-aminoacyl-tRNA + H2O = a tRNA + a D-alpha-amino acid + H(+). The enzyme catalyses glycyl-tRNA(Ala) + H2O = tRNA(Ala) + glycine + H(+). D-aminoacyl-tRNA deacylase with broad substrate specificity. By recycling D-aminoacyl-tRNA to D-amino acids and free tRNA molecules, this enzyme counteracts the toxicity associated with the formation of D-aminoacyl-tRNA entities in vivo. The polypeptide is D-aminoacyl-tRNA deacylase (Methanococcoides burtonii (strain DSM 6242 / NBRC 107633 / OCM 468 / ACE-M)).